The following is a 940-amino-acid chain: Vacuolar protein sorting-associated protein 54 (940 aa).

Phosphothreonine is present on Thr-30. Residues 192-218 are disordered; sequence QQLERDKPLENGAQGAPGPGTGGQTPT. A coiled-coil region spans residues 299 to 325; the sequence is HAILAEMEQAADQVRQLRAALAELHSH.

It belongs to the VPS54 family.

The protein localises to the golgi apparatus. It is found in the trans-Golgi network. Its function is as follows. May be involved in retrograde transport from early and late endosomes to late Golgi. Required during spermatogenesis for sperm individualization. This is Vacuolar protein sorting-associated protein 54 (scat) from Drosophila melanogaster (Fruit fly).